Here is a 347-residue protein sequence, read N- to C-terminus: GTPase Obg (347 aa).

The Obg domain maps to 1–159 (MHFIDQAEIE…VRLRLELKLI (159 aa)). Residues 160–328 (AEVGIVGLPN…LLQRVWQCLG (169 aa)) form the OBG-type G domain. Residues 166-173 (GLPNAGKS), 191-195 (FTTLQ), 213-216 (DIPG), 280-283 (NKID), and 309-311 (SAI) each bind GTP. Serine 173 and threonine 193 together coordinate Mg(2+).

The protein belongs to the TRAFAC class OBG-HflX-like GTPase superfamily. OBG GTPase family. Monomer. Requires Mg(2+) as cofactor.

Its subcellular location is the cytoplasm. Functionally, an essential GTPase which binds GTP, GDP and possibly (p)ppGpp with moderate affinity, with high nucleotide exchange rates and a fairly low GTP hydrolysis rate. Plays a role in control of the cell cycle, stress response, ribosome biogenesis and in those bacteria that undergo differentiation, in morphogenesis control. The sequence is that of GTPase Obg from Synechococcus sp. (strain JA-2-3B'a(2-13)) (Cyanobacteria bacterium Yellowstone B-Prime).